Here is a 303-residue protein sequence, read N- to C-terminus: Bifunctional protein FolD (303 aa).

Residues 175 to 177 (GVS) and Ile-243 each bind NADP(+).

Belongs to the tetrahydrofolate dehydrogenase/cyclohydrolase family. In terms of assembly, homodimer.

The catalysed reaction is (6R)-5,10-methylene-5,6,7,8-tetrahydrofolate + NADP(+) = (6R)-5,10-methenyltetrahydrofolate + NADPH. The enzyme catalyses (6R)-5,10-methenyltetrahydrofolate + H2O = (6R)-10-formyltetrahydrofolate + H(+). It functions in the pathway one-carbon metabolism; tetrahydrofolate interconversion. Catalyzes the oxidation of 5,10-methylenetetrahydrofolate to 5,10-methenyltetrahydrofolate and then the hydrolysis of 5,10-methenyltetrahydrofolate to 10-formyltetrahydrofolate. In Xanthomonas oryzae pv. oryzae (strain PXO99A), this protein is Bifunctional protein FolD.